The sequence spans 331 residues: uncharacterized protein (331 aa).

The protein belongs to the proline racemase family.

This is an uncharacterized protein from Bacillus anthracis.